The sequence spans 258 residues: 4-hydroxy-tetrahydrodipicolinate reductase (258 aa).

Residues 8 to 13 (GVTGRM), 93 to 95 (GTT), and 117 to 120 (AANF) contribute to the NAD(+) site. Residue histidine 149 is the Proton donor/acceptor of the active site. Histidine 150 contacts (S)-2,3,4,5-tetrahydrodipicolinate. Catalysis depends on lysine 153, which acts as the Proton donor. 159–160 (GT) contributes to the (S)-2,3,4,5-tetrahydrodipicolinate binding site.

It belongs to the DapB family.

Its subcellular location is the cytoplasm. It catalyses the reaction (S)-2,3,4,5-tetrahydrodipicolinate + NAD(+) + H2O = (2S,4S)-4-hydroxy-2,3,4,5-tetrahydrodipicolinate + NADH + H(+). It carries out the reaction (S)-2,3,4,5-tetrahydrodipicolinate + NADP(+) + H2O = (2S,4S)-4-hydroxy-2,3,4,5-tetrahydrodipicolinate + NADPH + H(+). It functions in the pathway amino-acid biosynthesis; L-lysine biosynthesis via DAP pathway; (S)-tetrahydrodipicolinate from L-aspartate: step 4/4. In terms of biological role, catalyzes the conversion of 4-hydroxy-tetrahydrodipicolinate (HTPA) to tetrahydrodipicolinate. In Thermomicrobium roseum (strain ATCC 27502 / DSM 5159 / P-2), this protein is 4-hydroxy-tetrahydrodipicolinate reductase.